A 255-amino-acid polypeptide reads, in one-letter code: Shieldin complex subunit 3 (255 aa).

The interval 33 to 88 is sufficient for interaction with MAD2L2; it reads QDFPTHPLPRFIPWFPYDESKLPLKPERLPPVISEEAAESVKQYLAISEPGVKSQS. Positions 116-135 are disordered; sequence QTNAAHLDKNSGKEKQHKQR.

In terms of assembly, component of the shieldin complex, consisting of SHLD1, SHLD2, SHLD3 and MAD2L2/REV7. Within the complex, SHLD2 forms a scaffold which interacts with a SHLD3-MAD2L2 subcomplex via its N-terminus, and with SHLD1 via its C-terminus. Interacts with ASTE1.

It is found in the chromosome. Component of the shieldin complex, which plays an important role in repair of DNA double-stranded breaks (DSBs). During G1 and S phase of the cell cycle, the complex functions downstream of TP53BP1 to promote non-homologous end joining (NHEJ) and suppress DNA end resection. Mediates various NHEJ-dependent processes including immunoglobulin class-switch recombination, and fusion of unprotected telomeres. The sequence is that of Shieldin complex subunit 3 from Mus musculus (Mouse).